Reading from the N-terminus, the 811-residue chain is Protein MEI2-like 5 (811 aa).

2 RRM domains span residues 193–266 and 278–351; these read RTLF…YSIP and GTLV…PSRP. Positions 371 to 397 are disordered; the sequence is TKHNSFQIGSPSANSPPSLWSQLGSPT. Residues 374–397 show a composition bias toward polar residues; that stretch reads NSFQIGSPSANSPPSLWSQLGSPT.

Probable RNA-binding protein that may play a role in growth regulation. This chain is Protein MEI2-like 5 (ML5), found in Oryza sativa subsp. japonica (Rice).